Consider the following 199-residue polypeptide: Holliday junction branch migration complex subunit RuvA (199 aa).

The domain I stretch occupies residues 1–63; that stretch reads MIGCLIGEVF…EDAQQLYGFS (63 aa). The segment at 64-142 is domain II; it reads DAQEKTIFRT…TLAQGTSSAA (79 aa). Residues 143-150 form a flexible linker region; that stretch reads ALPQIQFV. Residues 150-199 form a domain III region; sequence VSNSPVAEAEAALQSLGYKPLEAQKAVAAVKADYTESADIIRAALKSMMK.

This sequence belongs to the RuvA family. Homotetramer. Forms an RuvA(8)-RuvB(12)-Holliday junction (HJ) complex. HJ DNA is sandwiched between 2 RuvA tetramers; dsDNA enters through RuvA and exits via RuvB. An RuvB hexamer assembles on each DNA strand where it exits the tetramer. Each RuvB hexamer is contacted by two RuvA subunits (via domain III) on 2 adjacent RuvB subunits; this complex drives branch migration. In the full resolvosome a probable DNA-RuvA(4)-RuvB(12)-RuvC(2) complex forms which resolves the HJ.

It localises to the cytoplasm. In terms of biological role, the RuvA-RuvB-RuvC complex processes Holliday junction (HJ) DNA during genetic recombination and DNA repair, while the RuvA-RuvB complex plays an important role in the rescue of blocked DNA replication forks via replication fork reversal (RFR). RuvA specifically binds to HJ cruciform DNA, conferring on it an open structure. The RuvB hexamer acts as an ATP-dependent pump, pulling dsDNA into and through the RuvAB complex. HJ branch migration allows RuvC to scan DNA until it finds its consensus sequence, where it cleaves and resolves the cruciform DNA. The polypeptide is Holliday junction branch migration complex subunit RuvA (Acinetobacter baumannii (strain AB307-0294)).